Consider the following 198-residue polypeptide: Probable GTP-binding protein EngB (198 aa).

An EngB-type G domain is found at 21 to 195; that stretch reads NFSEVAFLGR…EDIIINQTLG (175 aa). GTP contacts are provided by residues 29-36, 56-60, 81-84, 151-154, and 174-176; these read GRSNVGKS, GKTQL, DLPG, TKCD, and VSN. Positions 36 and 58 each coordinate Mg(2+).

Belongs to the TRAFAC class TrmE-Era-EngA-EngB-Septin-like GTPase superfamily. EngB GTPase family. The cofactor is Mg(2+).

Its function is as follows. Necessary for normal cell division and for the maintenance of normal septation. The polypeptide is Probable GTP-binding protein EngB (Campylobacter jejuni (strain RM1221)).